Reading from the N-terminus, the 391-residue chain is MGKSDFLSPKAIANRIKSKGLQKLRWYCQMCQKQCRDENGFKCHCMSESHQRQLLLASENPQQFMDYFSEEFRNDFLELLRRRFGTKRVHNNIVYNEYISHREHIHMNATQWETLTDFTKWLGREGLCKVDETPKGWYIQYIDRDPETIRRQLELEKKKKQDLDDEEKTAKFIEEQVRRGLEGKEQETPVFTELSRENEEEKVTFNLNKGAGGSAGATTSKSSSLGPSALKLLGSAASGKRKESSQSSAQPAKKKKSALDEIMELEEEKKRTARTDAWLQPGIVVKIITKKLGEKYHKKKGVVKEVIDRYTAVVKMTDSGDRLKLDQTHLETVIPAPGKRVLVLNGGYRGNEGTLESINEKAFSATIVIETGPLKGRRVEGIQYEDISKLA.

The segment at 28 to 50 (CQMCQKQCRDENGFKCHCMSESH) adopts a C2H2-type zinc-finger fold. Residues 51 to 160 (QRQLLLASEN…RQLELEKKKK (110 aa)) are winged helix-turn-helix (wHTH). Lysine 135 carries the post-translational modification N6,N6,N6-trimethyllysine; by METTL22; alternate. An N6-methyllysine; alternate modification is found at lysine 135. Coiled-coil stretches lie at residues 147-180 (ETIR…VRRG) and 252-275 (AKKK…TART). A disordered region spans residues 206–258 (NLNKGAGGSAGATTSKSSSLGPSALKLLGSAASGKRKESSQSSAQPAKKKKSA). The C-terminal subdomain A stretch occupies residues 282 to 332 (GIVVKIITKKLGEKYHKKKGVVKEVIDRYTAVVKMTDSGDRLKLDQTHLET). The interval 338-389 (GKRVLVLNGGYRGNEGTLESINEKAFSATIVIETGPLKGRRVEGIQYEDISK) is C-terminal subdomain B.

Belongs to the KIN17 family. In terms of assembly, associated with DNA polymerase alpha, RFC1 and cyclin A, in multiprotein DNA replication complexes. Also associates with replication origins at the G1/S phase boundary and throughout the S phase in vivo. Highly expressed in transformed mouse AtT20 neuroendocrine cells. Expressed at a lower level in testis, kidney, skeletal muscle, liver, lung, spleen, brain and heart and kidney. In testis, expressed at much higher levels in proliferating cells than in differentiating cells. Not detected in embryo.

It localises to the nucleus. The protein localises to the cytoplasm. Its function is as follows. Involved in DNA replication and the cellular response to DNA damage. May participate in DNA replication factories and create a bridge between DNA replication and repair mediated by high molecular weight complexes. May play a role in illegitimate recombination and regulation of gene expression. May participate in mRNA processing. Binds, in vitro, to double-stranded DNA. Also shown to bind preferentially to curved DNA in vitro and in vivo. Binds via its C-terminal domain to RNA in vitro. The sequence is that of DNA/RNA-binding protein KIN17 from Mus musculus (Mouse).